A 335-amino-acid chain; its full sequence is Leucine-rich repeat-containing protein 39 (335 aa).

Residues 10–47 are a coiled coil; the sequence is AVNAVKEVWEKRIKKLNEDLKREKEFQHKLVRIWEERV. LRR repeat units lie at residues 84–105, 107–128, 130–151, 153–176, 177–197, 200–221, 223–244, 246–267, and 269–290; these read QLQE…IGRF, NLIV…IGLL, RLQE…LSNC, SLEK…SNLL, KLTH…AVLN, ALEW…IERM, NLHT…ISNM, NLGT…MEEM, and NLRF…PPSE.

In terms of assembly, interacts with MYH7 (via C-terminus). In terms of tissue distribution, highly expressed in skeletal muscle and heart. Not detected in other tissues tested.

It localises to the cytoplasm. Its subcellular location is the myofibril. The protein localises to the sarcomere. The protein resides in the m line. Functionally, component of the sarcomeric M-band which plays a role in myocyte response to biomechanical stress. May regulate expression of other M-band proteins via an SRF-dependent pathway. Important for normal contractile function in heart. The chain is Leucine-rich repeat-containing protein 39 (LRRC39) from Homo sapiens (Human).